The following is a 308-amino-acid chain: Cytochrome c biogenesis protein CcsA (308 aa).

7 helical membrane-spanning segments follow: residues 2–22 (IVST…SILI), 44–64 (GMLV…IYLG), 71–91 (LSES…IAYF), 143–163 (MILG…LMVI), 212–232 (VIGL…VWAN), 239–259 (WSWD…AIYL), and 273–293 (AIVA…VNLV).

The protein belongs to the CcmF/CycK/Ccl1/NrfE/CcsA family. In terms of assembly, may interact with Ccs1.

It localises to the plastid membrane. Functionally, required during biogenesis of c-type cytochromes (cytochrome c6 and cytochrome f) at the step of heme attachment. This Cuscuta exaltata (Tall dodder) protein is Cytochrome c biogenesis protein CcsA.